We begin with the raw amino-acid sequence, 195 residues long: Probable serine/threonine-protein kinase BUD32 homolog (195 aa).

The Protein kinase domain occupies 1–195 (MKVYLGGEAE…GRYVERVSMG (195 aa)). ATP is bound at residue lysine 12. The active-site Proton acceptor is the aspartate 107.

Belongs to the protein kinase superfamily. Tyr protein kinase family. BUD32 subfamily.

The protein localises to the cytoplasm. It catalyses the reaction L-seryl-[protein] + ATP = O-phospho-L-seryl-[protein] + ADP + H(+). It carries out the reaction L-threonyl-[protein] + ATP = O-phospho-L-threonyl-[protein] + ADP + H(+). Could be involved in the formation of a threonylcarbamoyl group on adenosine at position 37 (t(6)A37) in tRNAs that read codons beginning with adenine. This Archaeoglobus fulgidus (strain ATCC 49558 / DSM 4304 / JCM 9628 / NBRC 100126 / VC-16) protein is Probable serine/threonine-protein kinase BUD32 homolog.